The following is a 240-amino-acid chain: MNKPLFIALDYDDQEKMWLFLNQLKDKQGLHVKLGMEMFYQYGPEIVRDLSAKGYQIFLDLKLHDIPNTVKRTAHQLAALGVYCTTVHALGGKQMIQAAKEGLIEGTPAGKPVPKLLAVTELTSISEEVLKNEQHCSLNLADEVKSLAHQAQEAEADGIICSPLEVKAMKSEFSDDFMFVTPGIRPKSYQKDDQARVATPGQARENGSTAIVVGRPITQAADPQKAYEEILKDWSKNDAK.

Substrate is bound by residues Asp10, Lys33, 60-69 (DLKLHDIPNT), Thr123, Arg185, Gln194, Gly214, and Arg215. Catalysis depends on Lys62, which acts as the Proton donor.

Belongs to the OMP decarboxylase family. Type 1 subfamily. Homodimer.

The catalysed reaction is orotidine 5'-phosphate + H(+) = UMP + CO2. Its pathway is pyrimidine metabolism; UMP biosynthesis via de novo pathway; UMP from orotate: step 2/2. Catalyzes the decarboxylation of orotidine 5'-monophosphate (OMP) to uridine 5'-monophosphate (UMP). The polypeptide is Orotidine 5'-phosphate decarboxylase (Lactobacillus delbrueckii subsp. bulgaricus (strain ATCC 11842 / DSM 20081 / BCRC 10696 / JCM 1002 / NBRC 13953 / NCIMB 11778 / NCTC 12712 / WDCM 00102 / Lb 14)).